Here is a 155-residue protein sequence, read N- to C-terminus: Small ribosomal subunit protein uS17 (155 aa).

It belongs to the universal ribosomal protein uS17 family. Component of the small ribosomal subunit. Mature ribosomes consist of a small (40S) and a large (60S) subunit. The 40S subunit contains about 32 different proteins and 1 molecule of RNA (18S). The 60S subunit contains 45 different proteins and 3 molecules of RNA (25S, 5.8S and 5S).

It localises to the cytoplasm. In terms of biological role, component of the ribosome, a large ribonucleoprotein complex responsible for the synthesis of proteins in the cell. The small ribosomal subunit (SSU) binds messenger RNAs (mRNAs) and translates the encoded message by selecting cognate aminoacyl-transfer RNA (tRNA) molecules. The large subunit (LSU) contains the ribosomal catalytic site termed the peptidyl transferase center (PTC), which catalyzes the formation of peptide bonds, thereby polymerizing the amino acids delivered by tRNAs into a polypeptide chain. The nascent polypeptides leave the ribosome through a tunnel in the LSU and interact with protein factors that function in enzymatic processing, targeting, and the membrane insertion of nascent chains at the exit of the ribosomal tunnel. The sequence is that of Small ribosomal subunit protein uS17 from Candida albicans (strain SC5314 / ATCC MYA-2876) (Yeast).